The following is a 349-amino-acid chain: Magnesium-protoporphyrin IX monomethyl ester [oxidative] cyclase (349 aa).

It belongs to the AcsF family. Requires Fe cation as cofactor.

The protein localises to the plastid. The protein resides in the chloroplast. The enzyme catalyses Mg-protoporphyrin IX 13-monomethyl ester + 3 NADPH + 3 O2 + 2 H(+) = 3,8-divinyl protochlorophyllide a + 3 NADP(+) + 5 H2O. It participates in porphyrin-containing compound metabolism; chlorophyll biosynthesis (light-independent). Catalyzes the formation of the isocyclic ring in chlorophyll biosynthesis. Mediates the cyclase reaction, which results in the formation of divinylprotochlorophyllide (Pchlide) characteristic of all chlorophylls from magnesium-protoporphyrin IX 13-monomethyl ester (MgPMME). The protein is Magnesium-protoporphyrin IX monomethyl ester [oxidative] cyclase of Porphyra purpurea (Red seaweed).